The primary structure comprises 505 residues: Cytochrome P450 9b2 (505 aa).

Residue cysteine 449 coordinates heme.

Belongs to the cytochrome P450 family. Heme is required as a cofactor.

It localises to the endoplasmic reticulum membrane. Its subcellular location is the microsome membrane. Its function is as follows. May be involved in the metabolism of insect hormones and in the breakdown of synthetic insecticides. This chain is Cytochrome P450 9b2 (Cyp9b2), found in Drosophila melanogaster (Fruit fly).